Here is a 222-residue protein sequence, read N- to C-terminus: Deoxyribose-phosphate aldolase (222 aa).

Asp92 functions as the Proton donor/acceptor in the catalytic mechanism. Lys156 serves as the catalytic Schiff-base intermediate with acetaldehyde. Lys185 serves as the catalytic Proton donor/acceptor.

The protein belongs to the DeoC/FbaB aldolase family. DeoC type 1 subfamily. In terms of assembly, homodimer.

It localises to the cytoplasm. It carries out the reaction 2-deoxy-D-ribose 5-phosphate = D-glyceraldehyde 3-phosphate + acetaldehyde. Its pathway is carbohydrate degradation; 2-deoxy-D-ribose 1-phosphate degradation; D-glyceraldehyde 3-phosphate and acetaldehyde from 2-deoxy-alpha-D-ribose 1-phosphate: step 2/2. With respect to regulation, shows high stability to high concentrations of acetaldehyde. Functionally, catalyzes a reversible aldol reaction between acetaldehyde and D-glyceraldehyde 3-phosphate to generate 2-deoxy-D-ribose 5-phosphate. This is Deoxyribose-phosphate aldolase from Aciduliprofundum boonei (strain DSM 19572 / T469).